A 1272-amino-acid chain; its full sequence is Myosin-binding protein C, cardiac-type (1272 aa).

The tract at residues 95–147 is disordered; sequence KEPEKSEPVAPAEASPAPAASELPAPPVESNQNPEVPPAETQPEEPVDPIGLF. The segment covering 102-117 has biased composition (low complexity); sequence PVAPAEASPAPAASEL. Residues 137–252 form the Ig-like C2-type 1 domain; sequence PEEPVDPIGL…NLIVNEAPVS (116 aa). Phosphoserine; by PKA and PKC is present on S265. A Phosphothreonine; by PKA and PKC modification is found at T274. S300 is subject to Phosphoserine; by PKA. 4 consecutive Ig-like C2-type domains span residues 359–451, 452–542, 543–640, and 644–763; these read KKST…VKEP, PILI…VQEK, KLEV…FVPR, and PKIH…ADIT. Fibronectin type-III domains lie at 772-868 and 870-965; these read PPEA…IAPP and EPTH…VQEI. The 89-residue stretch at 969-1057 folds into the Ig-like C2-type 6 domain; sequence PKICVPRHLR…ENMTDTVAIT (89 aa). The region spanning 1066-1161 is the Fibronectin type-III 3 domain; it reads PPQNIKLADV…TKNPAYIQKT (96 aa). S1169 carries the post-translational modification Phosphoserine; by PKC. The 85-residue stretch at 1179–1263 folds into the Ig-like C2-type 7 domain; it reads PKFTHPLVNR…VNERGEAEIE (85 aa).

The protein belongs to the immunoglobulin superfamily. MyBP family. Substrate for phosphorylation by PKA and PKC. Reversible phosphorylation appears to modulate contraction. As to expression, expressed specifically in cardiac muscle among adult tissues, but is also expressed transiently in the skeletal muscle at early developmental stages. Isoform Type I is found in embryonic skeletal muscle and isoform Type II is found in both embryonic skeletal and cardiac muscle.

Functionally, thick filament-associated protein located in the crossbridge region of vertebrate striated muscle A bands. In vitro it binds MHC, F-actin and native thin filaments, and modifies the activity of actin-activated myosin ATPase. It may modulate muscle contraction or may play a more structural role. May be involved in the early phase of myofibrillogenesis. In Gallus gallus (Chicken), this protein is Myosin-binding protein C, cardiac-type (MYBPC3).